The sequence spans 320 residues: tRNA pseudouridine synthase B (320 aa).

The Nucleophile role is filled by Asp49.

This sequence belongs to the pseudouridine synthase TruB family. Type 1 subfamily.

It carries out the reaction uridine(55) in tRNA = pseudouridine(55) in tRNA. Functionally, responsible for synthesis of pseudouridine from uracil-55 in the psi GC loop of transfer RNAs. This chain is tRNA pseudouridine synthase B, found in Bartonella bacilliformis (strain ATCC 35685 / KC583 / Herrer 020/F12,63).